The chain runs to 360 residues: Peptide chain release factor 1 (360 aa).

Residue glutamine 237 is modified to N5-methylglutamine.

Belongs to the prokaryotic/mitochondrial release factor family. Post-translationally, methylated by PrmC. Methylation increases the termination efficiency of RF1.

It is found in the cytoplasm. In terms of biological role, peptide chain release factor 1 directs the termination of translation in response to the peptide chain termination codons UAG and UAA. The protein is Peptide chain release factor 1 of Teredinibacter turnerae (strain ATCC 39867 / T7901).